A 103-amino-acid chain; its full sequence is Small ribosomal subunit protein uS10c (103 aa).

This sequence belongs to the universal ribosomal protein uS10 family. In terms of assembly, part of the 30S ribosomal subunit.

It is found in the plastid. It localises to the chloroplast. Involved in the binding of tRNA to the ribosomes. The sequence is that of Small ribosomal subunit protein uS10c from Emiliania huxleyi (Coccolithophore).